Reading from the N-terminus, the 341-residue chain is Holliday junction branch migration complex subunit RuvB (341 aa).

The large ATPase domain (RuvB-L) stretch occupies residues 1 to 182 (MKDRLISAVA…FGVISRLEYY (182 aa)). ATP is bound by residues Leu-21, Arg-22, Gly-63, Lys-66, Thr-67, Thr-68, 129 to 131 (EDY), Arg-172, Tyr-182, and Arg-219. Thr-67 is a binding site for Mg(2+). The small ATPAse domain (RuvB-S) stretch occupies residues 183–253 (RPEDLVLIVN…VAVEALKFLE (71 aa)). Positions 256 to 341 (PLGLDFADRR…REETDQVSLW (86 aa)) are head domain (RuvB-H). Residues Arg-311 and Arg-316 each coordinate DNA.

The protein belongs to the RuvB family. Homohexamer. Forms an RuvA(8)-RuvB(12)-Holliday junction (HJ) complex. HJ DNA is sandwiched between 2 RuvA tetramers; dsDNA enters through RuvA and exits via RuvB. An RuvB hexamer assembles on each DNA strand where it exits the tetramer. Each RuvB hexamer is contacted by two RuvA subunits (via domain III) on 2 adjacent RuvB subunits; this complex drives branch migration. In the full resolvosome a probable DNA-RuvA(4)-RuvB(12)-RuvC(2) complex forms which resolves the HJ.

Its subcellular location is the cytoplasm. The enzyme catalyses ATP + H2O = ADP + phosphate + H(+). Its function is as follows. The RuvA-RuvB-RuvC complex processes Holliday junction (HJ) DNA during genetic recombination and DNA repair, while the RuvA-RuvB complex plays an important role in the rescue of blocked DNA replication forks via replication fork reversal (RFR). RuvA specifically binds to HJ cruciform DNA, conferring on it an open structure. The RuvB hexamer acts as an ATP-dependent pump, pulling dsDNA into and through the RuvAB complex. RuvB forms 2 homohexamers on either side of HJ DNA bound by 1 or 2 RuvA tetramers; 4 subunits per hexamer contact DNA at a time. Coordinated motions by a converter formed by DNA-disengaged RuvB subunits stimulates ATP hydrolysis and nucleotide exchange. Immobilization of the converter enables RuvB to convert the ATP-contained energy into a lever motion, pulling 2 nucleotides of DNA out of the RuvA tetramer per ATP hydrolyzed, thus driving DNA branch migration. The RuvB motors rotate together with the DNA substrate, which together with the progressing nucleotide cycle form the mechanistic basis for DNA recombination by continuous HJ branch migration. Branch migration allows RuvC to scan DNA until it finds its consensus sequence, where it cleaves and resolves cruciform DNA. The chain is Holliday junction branch migration complex subunit RuvB from Pelotomaculum thermopropionicum (strain DSM 13744 / JCM 10971 / SI).